A 364-amino-acid chain; its full sequence is Peptide chain release factor 1 (364 aa).

At glutamine 232 the chain carries N5-methylglutamine.

The protein belongs to the prokaryotic/mitochondrial release factor family. Methylated by PrmC. Methylation increases the termination efficiency of RF1.

The protein localises to the cytoplasm. Functionally, peptide chain release factor 1 directs the termination of translation in response to the peptide chain termination codons UAG and UAA. This is Peptide chain release factor 1 from Sorangium cellulosum (strain So ce56) (Polyangium cellulosum (strain So ce56)).